Reading from the N-terminus, the 947-residue chain is Protein NETWORKED 2D (947 aa).

The NAB domain maps to 10 to 90 (YSWWWASHIR…ERYDHISTEL (81 aa)). Coiled-coil stretches lie at residues 176-205 (KPEAMGEIDKLQKEILALQTEKEFVKSSYE), 247-342 (MTET…HFES), and 375-433 (TALI…VLDK). 2 disordered regions span residues 455–555 (NLHE…DKTD) and 580–620 (EKQG…GEPD). The span at 474-514 (PQKDLEGEKRTLDISEEIKEHQKETGEEKKEAPVKSVKFEQ) shows a compositional bias: basic and acidic residues. Residues 525–536 (TIPSTNPDTVLE) show a composition bias toward polar residues. 3 stretches are compositionally biased toward basic and acidic residues: residues 537–555 (STEKVDSDLEKQDASDKTD), 580–589 (EKQGESDKID), and 610–620 (EDQKEKEGEPD). Coiled coils occupy residues 645-684 (RNFKDMKKTLDETKTKMKTENATKDDEIKLLREKMSLLQK) and 744-773 (GQIQSYDTSIEDLQAEISKLEQRRKQDGSS).

The protein belongs to the NET family.

Its function is as follows. Plant-specific actin binding protein. May be part of a membrane-cytoskeletal adapter complex. This chain is Protein NETWORKED 2D, found in Arabidopsis thaliana (Mouse-ear cress).